The following is a 119-amino-acid chain: Protein phosphatase EYA3 (119 aa).

It belongs to the HAD-like hydrolase superfamily. EYA family. Requires Mg(2+) as cofactor.

Its subcellular location is the cytoplasm. The protein resides in the nucleus. It carries out the reaction O-phospho-L-tyrosyl-[protein] + H2O = L-tyrosyl-[protein] + phosphate. Functionally, tyrosine phosphatase that specifically dephosphorylates 'Tyr-142' of histone H2AX (H2AXY142ph). 'Tyr-142' phosphorylation of histone H2AX plays a central role in DNA repair and acts as a mark that distinguishes between apoptotic and repair responses to genotoxic stress. Promotes efficient DNA repair by dephosphorylating H2AX, promoting the recruitment of DNA repair complexes containing MDC1. Its function as histone phosphatase probably explains its role in transcription regulation during organogenesis. May be involved in development of the eye. This chain is Protein phosphatase EYA3 (EYA3), found in Gallus gallus (Chicken).